The following is a 352-amino-acid chain: Alpha-2-HS-glycoprotein (352 aa).

Residues 1-18 (MKSLVLLLCFAQLWSCQS) form the signal peptide. Positions 19–133 (APQGAGLGFR…QFRVLHAQCH (115 aa)) constitute a Cystatin fetuin-A-type 1 domain. Cystine bridges form between Cys32-Cys343, Cys89-Cys100, Cys114-Cys132, Cys146-Cys149, Cys208-Cys219, and Cys230-Cys247. Asn99 is a glycosylation site (N-linked (GlcNAc...) asparagine). At Ser134 the chain carries Phosphoserine. Residue Thr135 is modified to Phosphothreonine. A Phosphoserine modification is found at Ser138. In terms of domain architecture, Cystatin fetuin-A-type 2 spans 144-250 (KFCPRCPILI…EEVSVACKLF (107 aa)). Residues Asn156 and Asn176 are each glycosylated (N-linked (GlcNAc...) asparagine). Over residues 256-273 (PANANPAGPAPTVGQAAP) the composition is skewed to low complexity. Residues 256-280 (PANANPAGPAPTVGQAAPVAPPAGP) form a disordered region. Residues Ser309, Ser313, Ser316, and Ser318 each carry the phosphoserine modification. The tract at residues 319-338 (GEVLHSPKVGQPGDAGAAGP) is disordered. Low complexity predominate over residues 328–338 (GQPGDAGAAGP).

It belongs to the fetuin family. In terms of processing, undergoes complex post-translational modification involving N-glycosylation, and addition of fucose and sialic acid residues. Phosphorylation occurs at a serine residue. Phosphorylated by FAM20C in the extracellular medium. In terms of tissue distribution, synthesized in liver and secreted by the hepatocytes in the blood.

Its subcellular location is the secreted. Functionally, could inhibit both insulin-receptor tyrosine kinase activity and insulin-stimulated receptor autophosphorylation and, concomitantly, antagonize the mitogenic effect of the hormone in cultured rat hepatoma cells. This is Alpha-2-HS-glycoprotein (Ahsg) from Rattus norvegicus (Rat).